We begin with the raw amino-acid sequence, 91 residues long: Islet amyloid polypeptide (91 aa).

A signal peptide spans 1-22 (MGILKLPVVLIVLCVALNHLEG). Residues 23 to 33 (GGKPTESHQME) constitute a propeptide that is removed on maturation. C37 and C42 are joined by a disulfide. Y72 carries the tyrosine amide modification. The propeptide occupies 78 to 91 (VEILKREPLSYLPI).

The protein belongs to the calcitonin family. As to quaternary structure, can form homodimers. Interacts with IDE and INS. Interaction with INS inhibits homodimerization and fibril formation.

It localises to the secreted. Its function is as follows. Amylin/IAPP is a glucoregulatory peptide hormone that plays an important role in the regulation of energy homeostasis. Selectively inhibits insulin-stimulated glucose utilization and glycogen deposition in muscle, while not affecting adipocyte glucose metabolism. IAPP function is mediated by the CALCR-RAMPs (AMYRs) receptor complexes. Amylin can also bind CALCR receptor in the absence of RAMPs, although it is more selective for AMYRs. In Bos taurus (Bovine), this protein is Islet amyloid polypeptide (IAPP).